The chain runs to 95 residues: Integration host factor subunit beta (95 aa).

This sequence belongs to the bacterial histone-like protein family. Heterodimer of an alpha and a beta chain.

Its function is as follows. This protein is one of the two subunits of integration host factor, a specific DNA-binding protein that functions in genetic recombination as well as in transcriptional and translational control. In Shewanella amazonensis (strain ATCC BAA-1098 / SB2B), this protein is Integration host factor subunit beta.